A 158-amino-acid chain; its full sequence is Transcription elongation factor GreA (158 aa).

The protein belongs to the GreA/GreB family.

Its function is as follows. Necessary for efficient RNA polymerase transcription elongation past template-encoded arresting sites. The arresting sites in DNA have the property of trapping a certain fraction of elongating RNA polymerases that pass through, resulting in locked ternary complexes. Cleavage of the nascent transcript by cleavage factors such as GreA or GreB allows the resumption of elongation from the new 3'terminus. GreA releases sequences of 2 to 3 nucleotides. The protein is Transcription elongation factor GreA of Pelagibacter ubique (strain HTCC1062).